The chain runs to 367 residues: Quinolinate synthase (367 aa).

Histidine 45 and serine 62 together coordinate iminosuccinate. Cysteine 109 contributes to the [4Fe-4S] cluster binding site. Iminosuccinate-binding positions include 140–142 and serine 161; that span reads YVN. Cysteine 229 is a binding site for [4Fe-4S] cluster. Residues 255 to 257 and threonine 272 contribute to the iminosuccinate site; that span reads HPE. [4Fe-4S] cluster is bound at residue cysteine 319.

The protein belongs to the quinolinate synthase family. Type 3 subfamily. Requires [4Fe-4S] cluster as cofactor.

It localises to the cytoplasm. It catalyses the reaction iminosuccinate + dihydroxyacetone phosphate = quinolinate + phosphate + 2 H2O + H(+). It participates in cofactor biosynthesis; NAD(+) biosynthesis; quinolinate from iminoaspartate: step 1/1. Catalyzes the condensation of iminoaspartate with dihydroxyacetone phosphate to form quinolinate. This is Quinolinate synthase from Anoxybacillus flavithermus (strain DSM 21510 / WK1).